Consider the following 122-residue polypeptide: Large ribosomal subunit protein uL14 (122 aa).

It belongs to the universal ribosomal protein uL14 family. In terms of assembly, part of the 50S ribosomal subunit. Forms a cluster with proteins L3 and L19. In the 70S ribosome, L14 and L19 interact and together make contacts with the 16S rRNA in bridges B5 and B8.

In terms of biological role, binds to 23S rRNA. Forms part of two intersubunit bridges in the 70S ribosome. This Mycoplasmopsis agalactiae (strain NCTC 10123 / CIP 59.7 / PG2) (Mycoplasma agalactiae) protein is Large ribosomal subunit protein uL14.